The sequence spans 67 residues: LPS-assembly lipoprotein LptM (67 aa).

The first 19 residues, 1-19, serve as a signal peptide directing secretion; sequence MKNVFKALTVLLTLFSLTG. Residue cysteine 20 is the site of N-palmitoyl cysteine attachment. Cysteine 20 is lipidated: S-diacylglycerol cysteine. The tract at residues 26-67 is disordered; the sequence is LYFPPADKNAPPPTKPVETQTQSTVPDKNDRATGDGPSQVNY. Residues 42-51 are compositionally biased toward polar residues; sequence VETQTQSTVP.

Belongs to the LptM family. Interacts with the outer membrane embedded portion of the LPS translocon formed by LptD and LptE (LptDE).

It is found in the cell outer membrane. Functionally, component of the lipopolysaccharide (LPS) transport (Lpt) pathway that promotes efficient assembly of the outer membrane LPS translocon (LptDE) by the BAM complex. Facilitates oxidative maturation of LptD by stabilizing a conformation of the LPS translocon in which LptD can efficiently acquire native disulfide bonds, thereby activating the LPS translocon. This Escherichia coli O157:H7 protein is LPS-assembly lipoprotein LptM.